The primary structure comprises 228 residues: UPF0758 protein CLB_3028 (228 aa).

The MPN domain maps to 106–228 (KISTPLDVSN…YVSMKEKGTI (123 aa)). The Zn(2+) site is built by His-177, His-179, and Asp-190. Residues 177-190 (HNHPSGDPTPSKED) carry the JAMM motif motif.

This sequence belongs to the UPF0758 family.

This is UPF0758 protein CLB_3028 from Clostridium botulinum (strain ATCC 19397 / Type A).